The primary structure comprises 340 residues: MTFWSILRQRCWGLVLVVAGVCVITFIISHLIPGDPARLLAGDRASDAIVENIRQQLGLDQPLYVQFYRYVSDLFHGDLGTSIRTGRPVLEELRIFFPATLELAFGALLLALLIGIPLGILSAVWRNRWLDHLVRIMAITGISTPAFWLGLGVIVLFYGHLQILPGGGRLDDWLDPPTHVTGFYLLDALLEGNGEVFFNALQHLILPALTLAFVHLGIVARQIRSAMLEQLSEDYIRTARASGLPGWYIVLCYALPNALIPSITVLGLALGDLLYGAVLTETVFAWPGMGAWVVTSIQALDFPAVMGFAVVVSFAYVLVNLVVDLLYLWIDPRIGRGGGE.

At 1-11 the chain is on the periplasmic side; that stretch reads MTFWSILRQRC. Residues 12-32 traverse the membrane as a helical segment; sequence WGLVLVVAGVCVITFIISHLI. Over 33–104 the chain is Cytoplasmic; the sequence is PGDPARLLAG…IFFPATLELA (72 aa). The ABC transmembrane type-1 domain maps to 97–327; it reads FPATLELAFG…LVNLVVDLLY (231 aa). The helical transmembrane segment at 105-125 threads the bilayer; sequence FGALLLALLIGIPLGILSAVW. Residues 126–135 are Periplasmic-facing; that stretch reads RNRWLDHLVR. A helical membrane pass occupies residues 136 to 156; sequence IMAITGISTPAFWLGLGVIVL. The Cytoplasmic segment spans residues 157-199; that stretch reads FYGHLQILPGGGRLDDWLDPPTHVTGFYLLDALLEGNGEVFFN. The helical transmembrane segment at 200–220 threads the bilayer; it reads ALQHLILPALTLAFVHLGIVA. The Periplasmic portion of the chain corresponds to 221–246; it reads RQIRSAMLEQLSEDYIRTARASGLPG. Residues 247 to 269 traverse the membrane as a helical segment; the sequence is WYIVLCYALPNALIPSITVLGLA. The Cytoplasmic segment spans residues 270-279; the sequence is LGDLLYGAVL. Residues 280-300 traverse the membrane as a helical segment; the sequence is TETVFAWPGMGAWVVTSIQAL. A topological domain (periplasmic) is located at residue Asp-301. Residues 302 to 322 form a helical membrane-spanning segment; it reads FPAVMGFAVVVSFAYVLVNLV. At 323–340 the chain is on the cytoplasmic side; it reads VDLLYLWIDPRIGRGGGE.

This sequence belongs to the binding-protein-dependent transport system permease family. OppBC subfamily. In terms of assembly, the complex is composed of two ATP-binding proteins (DdpD and DdpF), two transmembrane proteins (DdpB and DdpC) and a solute-binding protein (DdpA).

The protein resides in the cell inner membrane. Part of the ABC transporter complex DdpABCDF, which is probably involved in D,D-dipeptide transport. Probably responsible for the translocation of the substrate across the membrane. The protein is Probable D,D-dipeptide transport system permease protein DdpB (ddpB) of Escherichia coli (strain K12).